A 957-amino-acid chain; its full sequence is Glycine dehydrogenase (decarboxylating) (957 aa).

Residue lysine 708 is modified to N6-(pyridoxal phosphate)lysine.

The protein belongs to the GcvP family. As to quaternary structure, the glycine cleavage system is composed of four proteins: P, T, L and H. The cofactor is pyridoxal 5'-phosphate.

The enzyme catalyses N(6)-[(R)-lipoyl]-L-lysyl-[glycine-cleavage complex H protein] + glycine + H(+) = N(6)-[(R)-S(8)-aminomethyldihydrolipoyl]-L-lysyl-[glycine-cleavage complex H protein] + CO2. In terms of biological role, the glycine cleavage system catalyzes the degradation of glycine. The P protein binds the alpha-amino group of glycine through its pyridoxal phosphate cofactor; CO(2) is released and the remaining methylamine moiety is then transferred to the lipoamide cofactor of the H protein. This is Glycine dehydrogenase (decarboxylating) from Salmonella arizonae (strain ATCC BAA-731 / CDC346-86 / RSK2980).